Reading from the N-terminus, the 584-residue chain is Cation channel sperm-associated protein 2 (584 aa).

At 1-106 the chain is on the cytoplasmic side; that stretch reads MAHERGHLQL…LWAGWVLDSS (106 aa). The helical transmembrane segment at 107–129 threads the bilayer; the sequence is IFSNFIISLIFLNTFVLMVEIEL. Topologically, residues 130 to 138 are extracellular; it reads MNSTNTSLW. Residues 139 to 164 traverse the membrane as a helical segment; sequence PLKLALEVTDWFILLSFIVEILLMWL. Residues 165 to 173 are Cytoplasmic-facing; that stretch reads ASFFLFWKN. The chain crosses the membrane as a helical span at residues 174 to 198; it reads AWSVFDFVVTMLSLLPEFVVLIGVS. Residues 199-201 lie on the Extracellular side of the membrane; that stretch reads ADS. The helical transmembrane segment at 202–220 threads the bilayer; sequence VWLQLLRVSRVLRSLKLFA. Residues 221–237 lie on the Cytoplasmic side of the membrane; that stretch reads RFPQIKVILLALVRALK. Residues 238–260 form a helical membrane-spanning segment; the sequence is SMTFLLMLLLIFFYVFAVAGVYF. Over 261–279 the chain is Extracellular; the sequence is FKEYSRSTIENLEYNMFFS. An intramembrane region (helical; Pore-forming) is located at residues 280-292; that stretch reads DLLNSLVTVFILF. Residues 293 to 312 lie on the Extracellular side of the membrane; the sequence is TLDHWYAVLQDVWKVPEASR. The chain crosses the membrane as a helical span at residues 313–339; it reads VFSSIYVILWLLLGSIIFRNIIVAMMV. The Cytoplasmic portion of the chain corresponds to 340 to 584; that stretch reads TNFQNIRNEL…VQALMNFEDK (245 aa). Residues 376 to 386 show a composition bias toward polar residues; it reads SESLRGTSQGK. Disordered regions lie at residues 376–460 and 480–510; these read SESL…KGYT and AGKA…HDEA. Acidic residues-rich tracts occupy residues 390–418 and 426–443; these read DITE…EEKS and EKND…EEKS. Composition is skewed to basic and acidic residues over residues 444 to 460 and 483 to 496; these read DVEK…KGYT and AENE…KEKA.

This sequence belongs to the cation channel sperm-associated (TC 1.A.1.19) family. Component of the CatSper complex or CatSpermasome composed of the core pore-forming members CATSPER1, CATSPER2, CATSPER3 and CATSPER4 as well as auxiliary members CATSPERB, CATSPERG, CATSPERD, CATSPERE, CATSPERZ, C2CD6/CATSPERT, SLCO6C1, TMEM249, TMEM262 and EFCAB9. HSPA1 may be an additional auxiliary complex member. The core complex members CATSPER1, CATSPER2, CATSPER3 and CATSPER4 form a heterotetrameric channel. The auxiliary CATSPERB, CATSPERG, CATSPERD and CATSPERE subunits form a pavilion-like structure over the pore which stabilizes the complex through interactions with CATSPER4, CATSPER3, CATSPER1 and CATSPER2 respectively. SLCO6C1 interacts with CATSPERE and TMEM262/CATSPERH interacts with CATSPERB, further stabilizing the complex. C2CD6/CATSPERT interacts at least with CATSPERD and is required for targeting the CatSper complex in the flagellar membrane. Interacts with Ca(v)3.3/CACNA1I, leading to suppression of T-type calcium channel activity.

Its subcellular location is the cell projection. The protein localises to the cilium. The protein resides in the flagellum membrane. The enzyme catalyses Ca(2+)(in) = Ca(2+)(out). Activated by intracellular alkalinization. Its function is as follows. Pore-forming subunit of the CatSper complex, a sperm-specific voltage-gated calcium channel that plays a central role in sperm cell hyperactivation. Controls calcium entry to mediate the hyperactivated motility, a step needed for sperm motility which is essential late in the preparation of sperm for fertilization. In Rattus norvegicus (Rat), this protein is Cation channel sperm-associated protein 2 (Catsper2).